The chain runs to 859 residues: Pre-mRNA-splicing factor SYF1 (859 aa).

HAT repeat units lie at residues 17–49, 52–84, 88–108, 123–157, 177–219, 238–271, 427–459, 461–482, 520–554, 599–633, 639–675, 685–718, 720–754, and 756–790; these read NIRN…YWKE, RTDK…WEST, VETS…VRDC, YDLA…FVEE, DEAE…ERYL, RDNI…FELN, VYSE…LYWR, NAIS…PYIE, ILLE…YLEA, YEVM…VATS, LSPE…FEER, EILR…KAES, LGPS…FESS, and GETI…FELK.

Belongs to the crooked-neck family. As to quaternary structure, belongs to the NTC complex (or PRP19-associated complex), composed of at least CEF1, CLF1, ISY1, NTC20, SNT309, SYF1, SYF2, and PRP19. The NTC complex associates with the spliceosome after the release of the U1 and U4 snRNAs and forms the CWC spliceosome subcomplex (or CEF1-associated complex) reminiscent of a late-stage spliceosome composed also of the U2, U5 and U6 snRNAs and at least BUD13, BUD31, BRR2, CDC40, CUS1, CWC2, CWC15, CWC21, CWC22, CWC23, CWC24, CWC25, CWC27, ECM2, HSH155, IST3, LEA1, MSL1, PRP8, PRP9, PRP11, PRP21, PRP22, PRP45, PRP46, SLU7, SMB1, SMD1, SMD2, SMD3, SMX2, SMX3, SNU114, SPP2, RSE1 and YJU2. Interacts with CEF1, CLF1, ISY1, NTC20, PRP22, PRP46 and SYF2.

Its subcellular location is the nucleus. In terms of biological role, involved in pre-mRNA splicing and cell cycle control. As a component of the NTC complex (or PRP19-associated complex), associates to the spliceosome to mediate conformational rearrangement or to stabilize the structure of the spliceosome after U4 snRNA dissociation, which leads to spliceosome maturation. The protein is Pre-mRNA-splicing factor SYF1 (SYF1) of Saccharomyces cerevisiae (strain ATCC 204508 / S288c) (Baker's yeast).